The chain runs to 303 residues: Bifunctional protein FolD (303 aa).

Residues 168-170, Thr197, and Val238 contribute to the NADP(+) site; that span reads GRS.

The protein belongs to the tetrahydrofolate dehydrogenase/cyclohydrolase family. As to quaternary structure, homodimer.

The enzyme catalyses (6R)-5,10-methylene-5,6,7,8-tetrahydrofolate + NADP(+) = (6R)-5,10-methenyltetrahydrofolate + NADPH. It catalyses the reaction (6R)-5,10-methenyltetrahydrofolate + H2O = (6R)-10-formyltetrahydrofolate + H(+). The protein operates within one-carbon metabolism; tetrahydrofolate interconversion. Catalyzes the oxidation of 5,10-methylenetetrahydrofolate to 5,10-methenyltetrahydrofolate and then the hydrolysis of 5,10-methenyltetrahydrofolate to 10-formyltetrahydrofolate. In Desulfosudis oleivorans (strain DSM 6200 / JCM 39069 / Hxd3) (Desulfococcus oleovorans), this protein is Bifunctional protein FolD.